Consider the following 395-residue polypeptide: Chaperone protein DnaJ 1 (395 aa).

One can recognise a J domain in the interval 10-75; it reads DFYQELGVSS…AKRKEYDETR (66 aa). The CR-type zinc-finger motif lies at 164 to 242; it reads GVAMPLRLTS…CKGTGVTTRT (79 aa). Cysteine 177, cysteine 180, cysteine 194, cysteine 197, cysteine 216, cysteine 219, cysteine 230, and cysteine 233 together coordinate Zn(2+). CXXCXGXG motif repeat units lie at residues 177–184, 194–201, 216–223, and 230–237; these read CTNCHGSG, CPTCNGSG, CTDCRGSG, and CEECKGTG.

This sequence belongs to the DnaJ family. Homodimer. Zn(2+) is required as a cofactor.

Its subcellular location is the cytoplasm. In terms of biological role, participates actively in the response to hyperosmotic and heat shock by preventing the aggregation of stress-denatured proteins and by disaggregating proteins, also in an autonomous, DnaK-independent fashion. Unfolded proteins bind initially to DnaJ; upon interaction with the DnaJ-bound protein, DnaK hydrolyzes its bound ATP, resulting in the formation of a stable complex. GrpE releases ADP from DnaK; ATP binding to DnaK triggers the release of the substrate protein, thus completing the reaction cycle. Several rounds of ATP-dependent interactions between DnaJ, DnaK and GrpE are required for fully efficient folding. Also involved, together with DnaK and GrpE, in the DNA replication of plasmids through activation of initiation proteins. The polypeptide is Chaperone protein DnaJ 1 (Mycobacterium bovis (strain ATCC BAA-935 / AF2122/97)).